The chain runs to 550 residues: Methyl-coenzyme M reductase I subunit alpha (550 aa).

Coenzyme F430 is bound at residue Q147. Coenzyme B contacts are provided by residues R225, 256-257 (KH), and R270. A Pros-methylhistidine modification is found at H257. 5-methylarginine is present on R271. Position 333 (Y333) interacts with coenzyme M. 2-methylglutamine is present on Q400. Residue Y444 participates in coenzyme M binding. G445 is modified (1-thioglycine). D450 is modified ((Z)-2,3-didehydroaspartate). C452 carries the S-methylcysteine modification.

This sequence belongs to the methyl-coenzyme M reductase alpha subunit family. In terms of assembly, MCR is a hexamer of two alpha, two beta, and two gamma chains, forming a dimer of heterotrimers. Requires coenzyme F430 as cofactor. In terms of processing, the alpha subunit contains six modified amino acids near the active site region. Is methylated on His-257, Arg-271, Gln-400 and Cys-452, probably by the action of specific S-adenosylmethionine-dependent methyltransferases. Also contains a thioglycine at position 445, forming a thiopeptide bond. Contains a didehydroaspartate residue at position 450. The methylation on C5 of Arg-271 is a post-translational methylation not essential in vivo, but which plays a role for the stability and structural integrity of MCR.

It is found in the cytoplasm. It catalyses the reaction coenzyme B + methyl-coenzyme M = methane + coenzyme M-coenzyme B heterodisulfide. The protein operates within one-carbon metabolism; methyl-coenzyme M reduction; methane from methyl-coenzyme M: step 1/1. Methyl-coenzyme M reductase activity is inhibited by 3-nitrooxypropanol (3-NOP) in vitro and in vivo, by oxidation of its active site Ni(I), which stops both growth and methanogenesis. Is also inhibited by the reaction product CoM-S-S-CoB. In terms of biological role, component of the methyl-coenzyme M reductase (MCR) I that catalyzes the reductive cleavage of methyl-coenzyme M (CoM-S-CH3 or 2-(methylthio)ethanesulfonate) using coenzyme B (CoB or 7-mercaptoheptanoylthreonine phosphate) as reductant which results in the production of methane and the mixed heterodisulfide of CoB and CoM (CoM-S-S-CoB). This is the final step in methanogenesis. Neither N-6-mercaptohexanoylthreonine phosphate (H-S-HxoTP) nor N-8-mercaptooctanoylthreonine phosphate (H-SOcoTP) nor any other thiol compound such as CoA or CoM can substitute for CoB as the electron donor. The polypeptide is Methyl-coenzyme M reductase I subunit alpha (mcrA) (Methanothermobacter marburgensis (strain ATCC BAA-927 / DSM 2133 / JCM 14651 / NBRC 100331 / OCM 82 / Marburg) (Methanobacterium thermoautotrophicum)).